The following is a 186-amino-acid chain: Peptide deformylase 2 (186 aa).

2 residues coordinate Fe cation: C104 and H146. The active site involves E147. H150 contributes to the Fe cation binding site.

It belongs to the polypeptide deformylase family. It depends on Fe(2+) as a cofactor.

The enzyme catalyses N-terminal N-formyl-L-methionyl-[peptide] + H2O = N-terminal L-methionyl-[peptide] + formate. In terms of biological role, removes the formyl group from the N-terminal Met of newly synthesized proteins. Requires at least a dipeptide for an efficient rate of reaction. N-terminal L-methionine is a prerequisite for activity but the enzyme has broad specificity at other positions. This chain is Peptide deformylase 2, found in Streptomyces avermitilis (strain ATCC 31267 / DSM 46492 / JCM 5070 / NBRC 14893 / NCIMB 12804 / NRRL 8165 / MA-4680).